The following is a 258-amino-acid chain: Acetylglutamate kinase (258 aa).

Substrate contacts are provided by residues 44–45 (GG), Arg-66, and Asn-158. Residues 181–186 (DVSGIL) and 209–211 (IIT) each bind ATP.

This sequence belongs to the acetylglutamate kinase family. ArgB subfamily. In terms of assembly, homodimer.

Its subcellular location is the cytoplasm. It catalyses the reaction N-acetyl-L-glutamate + ATP = N-acetyl-L-glutamyl 5-phosphate + ADP. It participates in amino-acid biosynthesis; L-arginine biosynthesis; N(2)-acetyl-L-ornithine from L-glutamate: step 2/4. Catalyzes the ATP-dependent phosphorylation of N-acetyl-L-glutamate. This Escherichia coli O6:K15:H31 (strain 536 / UPEC) protein is Acetylglutamate kinase.